Reading from the N-terminus, the 95-residue chain is MSVDLATVKRVARLARIAVSEDEANRMVGELNGILGFVEQLSEVNVDGVEAMTSVTPTAMKKRTDEVTDGSKAADIVANAPVTDHNFFLVPKVVE.

It belongs to the GatC family. As to quaternary structure, heterotrimer of A, B and C subunits.

It carries out the reaction L-glutamyl-tRNA(Gln) + L-glutamine + ATP + H2O = L-glutaminyl-tRNA(Gln) + L-glutamate + ADP + phosphate + H(+). The catalysed reaction is L-aspartyl-tRNA(Asn) + L-glutamine + ATP + H2O = L-asparaginyl-tRNA(Asn) + L-glutamate + ADP + phosphate + 2 H(+). In terms of biological role, allows the formation of correctly charged Asn-tRNA(Asn) or Gln-tRNA(Gln) through the transamidation of misacylated Asp-tRNA(Asn) or Glu-tRNA(Gln) in organisms which lack either or both of asparaginyl-tRNA or glutaminyl-tRNA synthetases. The reaction takes place in the presence of glutamine and ATP through an activated phospho-Asp-tRNA(Asn) or phospho-Glu-tRNA(Gln). This Rhizobium johnstonii (strain DSM 114642 / LMG 32736 / 3841) (Rhizobium leguminosarum bv. viciae) protein is Aspartyl/glutamyl-tRNA(Asn/Gln) amidotransferase subunit C.